Here is a 375-residue protein sequence, read N- to C-terminus: tRNA-specific 2-thiouridylase MnmA (375 aa).

ATP is bound by residues 12–19 (GMSGGVDS) and Met-38. The interaction with target base in tRNA stretch occupies residues 98–100 (NPD). The active-site Nucleophile is the Cys-103. Cysteines 103 and 200 form a disulfide. Residue Gly-127 participates in ATP binding. The interaction with tRNA stretch occupies residues 150–152 (KDQ). Catalysis depends on Cys-200, which acts as the Cysteine persulfide intermediate. The interval 312–313 (RY) is interaction with tRNA.

This sequence belongs to the MnmA/TRMU family.

Its subcellular location is the cytoplasm. The catalysed reaction is S-sulfanyl-L-cysteinyl-[protein] + uridine(34) in tRNA + AH2 + ATP = 2-thiouridine(34) in tRNA + L-cysteinyl-[protein] + A + AMP + diphosphate + H(+). Functionally, catalyzes the 2-thiolation of uridine at the wobble position (U34) of tRNA, leading to the formation of s(2)U34. This chain is tRNA-specific 2-thiouridylase MnmA, found in Lactobacillus delbrueckii subsp. bulgaricus (strain ATCC 11842 / DSM 20081 / BCRC 10696 / JCM 1002 / NBRC 13953 / NCIMB 11778 / NCTC 12712 / WDCM 00102 / Lb 14).